The sequence spans 278 residues: tRNA pseudouridine synthase A (278 aa).

The active-site Nucleophile is the Asp-51. Substrate is bound at residue Tyr-109.

The protein belongs to the tRNA pseudouridine synthase TruA family. Homodimer.

The enzyme catalyses uridine(38/39/40) in tRNA = pseudouridine(38/39/40) in tRNA. Formation of pseudouridine at positions 38, 39 and 40 in the anticodon stem and loop of transfer RNAs. The sequence is that of tRNA pseudouridine synthase A from Paracidovorax citrulli (strain AAC00-1) (Acidovorax citrulli).